A 299-amino-acid chain; its full sequence is Proline iminopeptidase (299 aa).

The AB hydrolase-1 domain occupies 29–279 (PLLLLHGGPG…SRHMAFIDEP (251 aa)). S105 functions as the Nucleophile in the catalytic mechanism. The active site involves D245. The active-site Proton donor is the H272.

This sequence belongs to the peptidase S33 family.

The protein resides in the cell envelope. It carries out the reaction Release of N-terminal proline from a peptide.. Its function is as follows. Releases the N-terminal proline from various substrates. The protein is Proline iminopeptidase of Levilactobacillus brevis (strain ATCC 367 / BCRC 12310 / CIP 105137 / JCM 1170 / LMG 11437 / NCIMB 947 / NCTC 947) (Lactobacillus brevis).